The following is a 452-amino-acid chain: UDP-glycosyltransferase 76E4 (452 aa).

UDP-alpha-D-glucose contacts are provided by residues Thr-274, 333–335 (APQ), 350–358 (HCGWNSTLE), and 372–375 (QGEQ).

The protein belongs to the UDP-glycosyltransferase family.

The sequence is that of UDP-glycosyltransferase 76E4 (UGT76E4) from Arabidopsis thaliana (Mouse-ear cress).